The chain runs to 140 residues: uncharacterized protein (140 aa).

18–25 provides a ligand contact to ATP; that stretch reads GTNGSGKS.

This is an uncharacterized protein from Haemophilus influenzae (strain ATCC 51907 / DSM 11121 / KW20 / Rd).